The following is a 574-amino-acid chain: Putative dehydratase IlvD1 (574 aa).

Cys124 and Cys197 together coordinate [4Fe-4S] cluster.

It belongs to the IlvD/Edd family. [4Fe-4S] cluster serves as cofactor.

Its function is as follows. Involved in the degradation of galactose via the DeLey-Doudoroff pathway. In Rhizobium meliloti (strain 1021) (Ensifer meliloti), this protein is Putative dehydratase IlvD1 (ilvD1).